The chain runs to 385 residues: NifS/IcsS protein homolog (385 aa).

Residues 69-70 (GT), N149, Q178, and 199-201 (SSH) each bind pyridoxal 5'-phosphate. K202 bears the N6-(pyridoxal phosphate)lysine mark. T237 is a pyridoxal 5'-phosphate binding site. Catalysis depends on C325, which acts as the Cysteine persulfide intermediate. A [2Fe-2S] cluster-binding site is contributed by C325.

It belongs to the class-V pyridoxal-phosphate-dependent aminotransferase family. NifS/IscS subfamily. The cofactor is pyridoxal 5'-phosphate.

In Lactobacillus delbrueckii subsp. bulgaricus (strain ATCC 11842 / DSM 20081 / BCRC 10696 / JCM 1002 / NBRC 13953 / NCIMB 11778 / NCTC 12712 / WDCM 00102 / Lb 14), this protein is NifS/IcsS protein homolog.